The following is a 1086-amino-acid chain: Bifunctional helicase and thymine dioxygenase JBP2 (1086 aa).

Positions Met1–Leu518 are thymine dioxygenase. A disordered region spans residues Asp187–Asp220. The Fe cation site is built by His393, Asp395, and His443. Residue Arg457 participates in 2-oxoglutarate binding. Residues Glu519–Ser1084 form a DNA Helicase region. The 176-residue stretch at Val533–Asp708 folds into the Helicase ATP-binding domain. Leu546–Thr553 contributes to the ATP binding site. A DEAH box motif is present at residues Asp659 to His662. The Helicase C-terminal domain occupies Val883–Asp1041.

The protein in the C-terminal section; belongs to the SNF2/RAD54 helicase family. This sequence in the N-terminal section; belongs to the TET family. JBP2 subfamily. Requires Fe(2+) as cofactor.

It is found in the nucleus. The enzyme catalyses ATP + H2O = ADP + phosphate + H(+). The catalysed reaction is thymine + 2-oxoglutarate + O2 = 5-hydroxymethyluracil + succinate + CO2. Dioxygenase that catalyzes the first step of DNA base J (beta-d-glucosyl-HOMedU) biosynthesis by converting thymine to 5-hydroxymethyluracil (HOMedU). DNA base J is a hypermodified thymidine residue found in the genome of kinetoplastid parasites, which is localized primarily to repetitive DNA, namely the telomeres, and is implicated in the regulation of antigenic variation. Probably also acts as a DNA helicase. Recognizes and binds specific regions of the genome, hydrolyzes ATP and allows the DNA base J de novo synthesis. Involved in initial synthesis of DNA base J, JBP1 being able to act via the basal level of DNA base J and propagate further synthesis. In contrast to JBP1, it does not specifically bind DNA base J, however it binds chromatin. This Trypanosoma cruzi (strain CL Brener) protein is Bifunctional helicase and thymine dioxygenase JBP2 (JBP2).